The following is a 119-amino-acid chain: Large ribosomal subunit protein uL22 (119 aa).

The protein belongs to the universal ribosomal protein uL22 family. As to quaternary structure, part of the 50S ribosomal subunit.

In terms of biological role, this protein binds specifically to 23S rRNA; its binding is stimulated by other ribosomal proteins, e.g. L4, L17, and L20. It is important during the early stages of 50S assembly. It makes multiple contacts with different domains of the 23S rRNA in the assembled 50S subunit and ribosome. Its function is as follows. The globular domain of the protein is located near the polypeptide exit tunnel on the outside of the subunit, while an extended beta-hairpin is found that lines the wall of the exit tunnel in the center of the 70S ribosome. The sequence is that of Large ribosomal subunit protein uL22 from Rickettsia akari (strain Hartford).